The sequence spans 1061 residues: Transcription termination factor 2 (1061 aa).

Disordered regions lie at residues 1–163 (MSSE…TAEA) and 212–253 (ILSS…VKTS). The segment covering 32–46 (LSKSSRLSKSSRPSS) has biased composition (low complexity). Phosphoserine occurs at positions 108 and 110. Positions 138–152 (LSDDDSEIEYSDEVQ) are enriched in acidic residues. A phosphoserine mark is found at Ser214 and Ser215. At Thr216 the chain carries Phosphothreonine. Residues 237–253 (KSLSPRSSAGASVVKTS) show a composition bias toward polar residues. Residues 452–652 (WRERKLPRGG…YALLKFLRCS (201 aa)) enclose the Helicase ATP-binding domain. 465–472 (DDMGLGKT) serves as a coordination point for ATP. Residues 485–523 (GQEMSEGKDESSDSDSEDDKNKKRKSVTGWKSKGRKDTR) are disordered. The segment covering 506-522 (KKRKSVTGWKSKGRKDT) has biased composition (basic residues). A DEAH box motif is present at residues 603 to 606 (DEAH). The Helicase C-terminal domain occupies 891-1056 (KINMVIQILK…SSKLTIDDLK (166 aa)).

Belongs to the SNF2/RAD54 helicase family.

The protein resides in the nucleus. Its function is as follows. DsDNA-dependent ATPase which acts as a transcription termination factor by coupling ATP hydrolysis with removal of RNA polymerase II from the DNA template. The protein is Transcription termination factor 2 (lds) of Drosophila melanogaster (Fruit fly).